The primary structure comprises 246 residues: Sulfate transporter CysZ (246 aa).

The next 4 membrane-spanning stretches (helical) occupy residues 24 to 44 (LFVL…IGFA), 69 to 89 (IVWP…FTMV), 148 to 168 (LLVL…WILF), and 214 to 234 (LLIP…ATLF).

This sequence belongs to the CysZ family.

It localises to the cell inner membrane. In terms of biological role, high affinity, high specificity proton-dependent sulfate transporter, which mediates sulfate uptake. Provides the sulfur source for the cysteine synthesis pathway. The polypeptide is Sulfate transporter CysZ (Pseudomonas aeruginosa (strain ATCC 15692 / DSM 22644 / CIP 104116 / JCM 14847 / LMG 12228 / 1C / PRS 101 / PAO1)).